Consider the following 158-residue polypeptide: Sporulation-delaying protein SdpA (158 aa).

Its subcellular location is the cytoplasm. Required for the maturation of SdpC to SDP. Not required for SdpC signal peptide cleavage, secretion from the cell or disulfide bond formation. The polypeptide is Sporulation-delaying protein SdpA (Bacillus subtilis (strain 168)).